Reading from the N-terminus, the 109-residue chain is uncharacterized protein (109 aa).

Residues 63 to 85 (LFVKTFFACTYIIMLAFQVYIFL) form a helical membrane-spanning segment.

It localises to the membrane. This is an uncharacterized protein from Saccharomyces cerevisiae (strain ATCC 204508 / S288c) (Baker's yeast).